A 97-amino-acid polypeptide reads, in one-letter code: Putative septation protein SpoVG (97 aa).

It belongs to the SpoVG family.

Functionally, essential for sporulation. Interferes with or is a negative regulator of the pathway leading to asymmetric septation. The polypeptide is Putative septation protein SpoVG (Bacillus velezensis (strain DSM 23117 / BGSC 10A6 / LMG 26770 / FZB42) (Bacillus amyloliquefaciens subsp. plantarum)).